The chain runs to 405 residues: Argininosuccinate synthase (405 aa).

11–19 is an ATP binding site; sequence AYSGGLDTS. Tyr90 contacts L-citrulline. Gly119 lines the ATP pocket. The L-aspartate site is built by Thr121, Asn125, and Asp126. Residue Asn125 participates in L-citrulline binding. L-citrulline contacts are provided by Arg129, Ser178, Ser187, Glu263, and Tyr275.

Belongs to the argininosuccinate synthase family. Type 1 subfamily. As to quaternary structure, homotetramer.

It is found in the cytoplasm. It carries out the reaction L-citrulline + L-aspartate + ATP = 2-(N(omega)-L-arginino)succinate + AMP + diphosphate + H(+). It participates in amino-acid biosynthesis; L-arginine biosynthesis; L-arginine from L-ornithine and carbamoyl phosphate: step 2/3. The sequence is that of Argininosuccinate synthase from Legionella pneumophila (strain Paris).